Consider the following 352-residue polypeptide: Protein YpbB (352 aa).

As to quaternary structure, interacts with RecS and SSB (ssbA); the 6 C-terminal residues of SSB are required for interaction with YpbB.

Its subcellular location is the cytoplasm. The protein localises to the nucleoid. The chain is Protein YpbB (ypbB) from Bacillus subtilis (strain 168).